The sequence spans 423 residues: MSTRNCQGMDSVIKPLDTIPEDKKVRVQRTQSTFDPFEKPTNQVKRVHSENNACINFKTSSTGKESPKVRRHSSPSSPTSPKFGKADSYEKLEKLGEGSYATVYKGKSKVNGKLVALKVIRLQEEEGTPFTAIREASLLKGLKHANIVLLHDIIHTKETLTLVFEYVHTDLCQYMDKHPGGLHPDNVKLFLFQLLRGLSYIHQRYILHRDLKPQNLLISDTGELKLADFGLARAKSVPSHTYSNEVVTLWYRPPDVLLGSTEYSTCLDMWGVGCIFVEMIQGVAAFPGMKDIQDQLERIFLVLGTPNEDTWPGVHSLPHFKPERFTLYSSKNLRQAWNKLSYVNHAEDLASKLLQCSPKNRLSAQAALSHEYFSDLPPRLWELTDMSSIFTVPNVRLQPEAGESMRAFGKNNSYGKSLSNSKH.

Phosphoserine occurs at positions 32, 49, and 88. The segment covering 49–64 (SENNACINFKTSSTGK) has biased composition (polar residues). The segment at 49–87 (SENNACINFKTSSTGKESPKVRRHSSPSSPTSPKFGKAD) is disordered. The Protein kinase domain occupies 89-373 (YEKLEKLGEG…AQAALSHEYF (285 aa)). Residues 95–103 (LGEGSYATV) and lysine 118 contribute to the ATP site. The Proton acceptor role is filled by aspartate 210. Positions 403-423 (ESMRAFGKNNSYGKSLSNSKH) are disordered. Residues 410-423 (KNNSYGKSLSNSKH) show a composition bias toward polar residues.

It belongs to the protein kinase superfamily. CMGC Ser/Thr protein kinase family. CDC2/CDKX subfamily. Found in a complex with LRP6, CCNY and CAPRIN2 during G2/M stage; CAPRIN2 functions as a scaffold for the complex by binding to CCNY via its N terminus and to CDK14 via its C terminus. Interacts with CCNY; CCNY mediates its recruitment to the plasma membrane and promotes phosphorylation of LRP6. Interacts with CCDN3 and CDKN1A. Interacts with SEPT8. Interacts with 14-3-3 proteina YWHAB, YWHAE, YWHAH and YWHAQ.

The protein resides in the cell membrane. The protein localises to the cytoplasm. It is found in the nucleus. The catalysed reaction is L-seryl-[protein] + ATP = O-phospho-L-seryl-[protein] + ADP + H(+). It carries out the reaction L-threonyl-[protein] + ATP = O-phospho-L-threonyl-[protein] + ADP + H(+). Its activity is regulated as follows. Serine/threonine-protein kinase activity is promoted by associated cyclins CCDN3 and CCNY and repressed by CDKN1A. In terms of biological role, serine/threonine-protein kinase involved in the control of the eukaryotic cell cycle, whose activity is controlled by an associated cyclin. Acts as a cell-cycle regulator of Wnt signaling pathway during G2/M phase by mediating the phosphorylation of LRP6 at 'Ser-1490', leading to the activation of the Wnt signaling pathway. Acts as a regulator of cell cycle progression and cell proliferation via its interaction with CCDN3. Phosphorylates RB1 in vitro, however the relevance of such result remains to be confirmed in vivo. May also play a role in meiosis, neuron differentiation and may indirectly act as a negative regulator of insulin-responsive glucose transport. The protein is Cyclin-dependent kinase 14 (CDK14) of Callithrix jacchus (White-tufted-ear marmoset).